Consider the following 366-residue polypeptide: tRNA/tmRNA (uracil-C(5))-methyltransferase (366 aa).

Gln190, Tyr218, Asn223, Glu239, and Asp299 together coordinate S-adenosyl-L-methionine. The active-site Nucleophile is the Cys324. Glu358 serves as the catalytic Proton acceptor.

This sequence belongs to the class I-like SAM-binding methyltransferase superfamily. RNA M5U methyltransferase family. TrmA subfamily.

The catalysed reaction is uridine(54) in tRNA + S-adenosyl-L-methionine = 5-methyluridine(54) in tRNA + S-adenosyl-L-homocysteine + H(+). The enzyme catalyses uridine(341) in tmRNA + S-adenosyl-L-methionine = 5-methyluridine(341) in tmRNA + S-adenosyl-L-homocysteine + H(+). Its function is as follows. Dual-specificity methyltransferase that catalyzes the formation of 5-methyluridine at position 54 (m5U54) in all tRNAs, and that of position 341 (m5U341) in tmRNA (transfer-mRNA). The chain is tRNA/tmRNA (uracil-C(5))-methyltransferase from Klebsiella pneumoniae (strain 342).